A 137-amino-acid polypeptide reads, in one-letter code: Small ribosomal subunit protein uS12 (137 aa).

Positions 1-55 (MPTINQLVRKPRQSKIKKSDSPALNKGFNSKKKKFTDLNSPQKRGVCTRVGTMTP) are disordered. Asp-102 carries the post-translational modification 3-methylthioaspartic acid. The segment at 118 to 137 (SGVDGRRQGRSLYGTKKPKN) is disordered.

This sequence belongs to the universal ribosomal protein uS12 family. Part of the 30S ribosomal subunit. Contacts proteins S8 and S17. May interact with IF1 in the 30S initiation complex.

Functionally, with S4 and S5 plays an important role in translational accuracy. Interacts with and stabilizes bases of the 16S rRNA that are involved in tRNA selection in the A site and with the mRNA backbone. Located at the interface of the 30S and 50S subunits, it traverses the body of the 30S subunit contacting proteins on the other side and probably holding the rRNA structure together. The combined cluster of proteins S8, S12 and S17 appears to hold together the shoulder and platform of the 30S subunit. In Staphylococcus aureus (strain Mu3 / ATCC 700698), this protein is Small ribosomal subunit protein uS12.